The sequence spans 64 residues: DNA-directed RNA polymerase subunit Rpo10 (64 aa).

Cys-7, Cys-10, Cys-45, and Cys-46 together coordinate Zn(2+).

This sequence belongs to the archaeal Rpo10/eukaryotic RPB10 RNA polymerase subunit family. As to quaternary structure, part of the RNA polymerase complex. It depends on Zn(2+) as a cofactor.

It is found in the cytoplasm. It carries out the reaction RNA(n) + a ribonucleoside 5'-triphosphate = RNA(n+1) + diphosphate. In terms of biological role, DNA-dependent RNA polymerase (RNAP) catalyzes the transcription of DNA into RNA using the four ribonucleoside triphosphates as substrates. The polypeptide is DNA-directed RNA polymerase subunit Rpo10 (Natronomonas pharaonis (strain ATCC 35678 / DSM 2160 / CIP 103997 / JCM 8858 / NBRC 14720 / NCIMB 2260 / Gabara) (Halobacterium pharaonis)).